Consider the following 718-residue polypeptide: MMFRDQVGVLAGWFKGWNECEQTVALLSLLKRVSQTQARFLQLCLEHSLADCAELHVLEREANSPGIINQWQQESKDKVISLLLTHLPLLKPGNLDAKVEYMKLLPKILAHSIEHNQHIEESRQLLSYALIHPATSLEDRSALAMWLNHLEDRTSTSFGGQNRGRSDSVDYGQTHYYHQRQNSDDKLNGWQNSRDSGICINASNWQDKSMGCENGHVPLYSSSSVPTTINTIGTSTSTILSGQAHHSPLKRSVSLTPPMNVPNQPLGHGWMSHEDLRARGPQCLPSDHAPLSPQSSVASSGSGGSEHLEDQTTARNTFQEEGSGMKDVPAWLKSLRLHKYAALFSQMTYEEMMALTECQLEAQNVTKGARHKIVISIQKLKERQNLLKSLERDIIEGGSLRIPLQELHQMILTPIKAYSSPSTTPEARRREPQAPRQPSLMGPESQSPDCKDGAAATGATATPSAGASGGLQPHQLSSCDGELAVAPLPEGDLPGQFTRVMGKVCTQLLVSRPDEENISSYLQLIDKCLIHEAFTETQKKRLLSWKQQVQKLFRSFPRKTLLDISGYRQQRNRGFGQSNSLPTAGSVGGGMGRRNPRQYQIPSRNVPSARLGLLGTSGFVSSNQRNTTATPTIMKQGRQNLWFANPGGSNSMPSRTHSSVQRTRSLPVHTSPQNMLMFQQPEFQLPVTEPDINNRLESLCLSMTEHALGDGVDRTSTI.

The residue at position 168 (S168) is a Phosphoserine. Disordered regions lie at residues 278 to 323 (ARGP…EEGS), 416 to 474 (KAYS…LQPH), and 572 to 601 (NRGF…QYQI). Positions 323–391 (SGMKDVPAWL…ERQNLLKSLE (69 aa)) constitute an SAM domain. S420 is subject to Phosphoserine. T424 carries the post-translational modification Phosphothreonine. Positions 453-466 (GAAATGATATPSAG) are enriched in low complexity. R573 bears the Omega-N-methylarginine mark. The residue at position 580 (S580) is a Phosphoserine.

Belongs to the SMAUG family.

It is found in the cytoplasm. The protein localises to the cell projection. It localises to the dendrite. The protein resides in the synapse. Its subcellular location is the synaptosome. In terms of biological role, acts as a translational repressor of SRE-containing messengers. The sequence is that of Protein Smaug homolog 1 (SAMD4A) from Homo sapiens (Human).